We begin with the raw amino-acid sequence, 357 residues long: NmrA-like family domain-containing oxidoreductase notA' (357 aa).

NADP(+)-binding positions include 13–18 (GATGAQ), 39–43 (RKPES), 60–61 (DG), 81–83 (TNS), Lys-140, and 164–167 (YMDV).

The protein belongs to the NmrA-type oxidoreductase family.

Functionally, nmrA-like family domain-containing oxidoreductase; part of the gene cluster that mediates the biosynthesis of notoamide, a fungal indole alkaloid that belongs to a family of natural products containing a characteristic bicyclo[2.2.2]diazaoctane core. The first step of notoamide biosynthesis involves coupling of L-proline and L-tryptophan by the bimodular NRPS notE', to produce cyclo-L-tryptophan-L-proline called brevianamide F. The reverse prenyltransferase notF' then acts as a deoxybrevianamide E synthase and converts brevianamide F to deoxybrevianamide E via reverse prenylation at C-2 of the indole ring leading to the bicyclo[2.2.2]diazaoctane core. Deoxybrevianamide E is further hydroxylated at C-6 of the indole ring, likely catalyzed by the cytochrome P450 monooxygenase notG', to yield 6-hydroxy-deoxybrevianamide E. 6-hydroxy-deoxybrevianamide E is a specific substrate of the prenyltransferase notC' for normal prenylation at C-7 to produce 6-hydroxy-7-prenyl-deoxybrevianamide, also called notoamide S. As the proposed pivotal branching point in notoamide biosynthesis, notoamide S can be diverted to notoamide E through an oxidative pyran ring closure putatively catalyzed by either notH' cytochrome P450 monooxygenase or the notD' FAD-linked oxidoreductase. This step would be followed by an indole 2,3-epoxidation-initiated pinacol-like rearrangement catalyzed by the notB' FAD-dependent monooxygenase leading to the formation of notoamide C and notoamide D. On the other hand notoamide S is converted to notoamide T by notH' (or notD'), a bifunctional oxidase that also functions as the intramolecular Diels-Alderase responsible for generation of (-)-notoamide T. To generate antipodal (+)-notoaminide T, notH (or notD) in Aspergillus strain MF297-2 is expected to catalyze a Diels-Alder reaction leading to the opposite stereochemistry. The remaining oxidoreductase notD' (or notH') likely catalyzes the oxidative pyran ring formation to yield (-)-stephacidin A. The FAD-dependent monooxygenase notI' is highly similar to notB' and is predicted to catalyze a similar conversion from (-)-stephacidin A to (+)-notoamide B via the 2,3-epoxidation of (-)-stephacidin A followed by a pinacol-type rearrangement. Finally, it remains unclear which enzyme could be responsible for the final hydroxylation steps leading to notoamide A and sclerotiamide. This chain is NmrA-like family domain-containing oxidoreductase notA', found in Aspergillus versicolor.